We begin with the raw amino-acid sequence, 195 residues long: Cytochrome c oxidase subunit 1 (195 aa).

The chain crosses the membrane as a helical span at residues 12–32 (MYWVLGFIFLFTLGGLTGIVL). Residues histidine 42 and aspartate 43 each coordinate Mg(2+). Position 50 (histidine 50) interacts with heme a3. A Fe(II)-heme a-binding site is contributed by histidine 52. 3 helical membrane passes run 59-79 (AVFAIFAGFNFWFPVMTGLVL), 88-108 (FIVMFIAVNMTFFPQHFLGLA), and 131-151 (GSLMSVFAVLLFVLIVWEAFL).

The protein belongs to the heme-copper respiratory oxidase family. In terms of assembly, component of the cytochrome c oxidase (complex IV, CIV), a multisubunit enzyme composed of a catalytic core of 3 subunits and several supernumerary subunits. The complex exists as a monomer or a dimer and forms supercomplexes (SCs) in the inner mitochondrial membrane with ubiquinol-cytochrome c oxidoreductase (cytochrome b-c1 complex, complex III, CIII). Heme serves as cofactor. Requires Cu cation as cofactor.

Its subcellular location is the mitochondrion inner membrane. The catalysed reaction is 4 Fe(II)-[cytochrome c] + O2 + 8 H(+)(in) = 4 Fe(III)-[cytochrome c] + 2 H2O + 4 H(+)(out). The protein operates within energy metabolism; oxidative phosphorylation. Its function is as follows. Component of the cytochrome c oxidase, the last enzyme in the mitochondrial electron transport chain which drives oxidative phosphorylation. The respiratory chain contains 3 multisubunit complexes succinate dehydrogenase (complex II, CII), ubiquinol-cytochrome c oxidoreductase (cytochrome b-c1 complex, complex III, CIII) and cytochrome c oxidase (complex IV, CIV), that cooperate to transfer electrons derived from NADH and succinate to molecular oxygen, creating an electrochemical gradient over the inner membrane that drives transmembrane transport and the ATP synthase. Cytochrome c oxidase is the component of the respiratory chain that catalyzes the reduction of oxygen to water. Electrons originating from reduced cytochrome c in the intermembrane space (IMS) are transferred via the dinuclear copper A center (CU(A)) of subunit 2 and heme A of subunit 1 to the active site in subunit 1, a binuclear center (BNC) formed by heme A3 and copper B (CU(B)). The BNC reduces molecular oxygen to 2 water molecules using 4 electrons from cytochrome c in the IMS and 4 protons from the mitochondrial matrix. In Albinaria turrita (Door snail), this protein is Cytochrome c oxidase subunit 1 (COI).